Reading from the N-terminus, the 120-residue chain is Ribonuclease P protein component (120 aa).

The protein belongs to the RnpA family. In terms of assembly, consists of a catalytic RNA component (M1 or rnpB) and a protein subunit.

It carries out the reaction Endonucleolytic cleavage of RNA, removing 5'-extranucleotides from tRNA precursor.. In terms of biological role, RNaseP catalyzes the removal of the 5'-leader sequence from pre-tRNA to produce the mature 5'-terminus. It can also cleave other RNA substrates such as 4.5S RNA. The protein component plays an auxiliary but essential role in vivo by binding to the 5'-leader sequence and broadening the substrate specificity of the ribozyme. The polypeptide is Ribonuclease P protein component (Dehalococcoides mccartyi (strain CBDB1)).